The sequence spans 281 residues: Bifunctional protein FolD (281 aa).

NADP(+) contacts are provided by residues 165 to 167 (GRG), Thr-192, and Val-233.

It belongs to the tetrahydrofolate dehydrogenase/cyclohydrolase family. Homodimer.

The catalysed reaction is (6R)-5,10-methylene-5,6,7,8-tetrahydrofolate + NADP(+) = (6R)-5,10-methenyltetrahydrofolate + NADPH. It catalyses the reaction (6R)-5,10-methenyltetrahydrofolate + H2O = (6R)-10-formyltetrahydrofolate + H(+). The protein operates within one-carbon metabolism; tetrahydrofolate interconversion. Catalyzes the oxidation of 5,10-methylenetetrahydrofolate to 5,10-methenyltetrahydrofolate and then the hydrolysis of 5,10-methenyltetrahydrofolate to 10-formyltetrahydrofolate. This Mycobacterium tuberculosis (strain ATCC 25177 / H37Ra) protein is Bifunctional protein FolD.